Reading from the N-terminus, the 439-residue chain is MGHSAVLLCVALAILPACVTGAPVQRQHKLLLVSFDGFRWNYDQDVDTPNLDSMAQEGVKAQYMTPAFVTMTSPCHFTLVTGKYIENHGVVHNMFYNTTSTVRLPYHATLGIQRWWDNGSIPIWITAQRQGLKTGSFFYPGGNVTYQGEAVTMSRKEGVLHNYKNETEWRGNVDTVMKWFLEEDVSLVTLYFGEPDSTGHKYGPESQERKDMVKQVDRTVGYLRDSIKRHHLSDSLNLIITSDHGMTTVNKKASDLVEFHKFSNFTFQDIQFELLDYGPIGMLIPKEGMLEKVYSVLKDAHPRLHVYKKEDFPKNFHYANNPRITPLLMYSDLGYVIHGRVNVQFNNGEHGFNNQDMDMKTIFRAVGPSFKAGLEVEPFESVHVYELMCQLLGIVPEPNDGNPGILRPMLRSGSASLLSSQHHLVALLVGILTCLAKVL.

An N-terminal signal peptide occupies residues 1–21 (MGHSAVLLCVALAILPACVTG). Over 22–414 (APVQRQHKLL…ILRPMLRSGS (393 aa)) the chain is Extracellular. Positions 36 and 72 each coordinate Zn(2+). A required for enzyme activity region spans residues 69–75 (VTMTSPC). Thr-72 functions as the Nucleophile in the catalytic mechanism. Residue Asn-93 participates in substrate binding. Residues Asn-97, Asn-118, Asn-143, and Asn-165 are each glycosylated (N-linked (GlcNAc...) asparagine). The Zn(2+) site is built by Asp-196, His-200, Asp-243, and His-244. N-linked (GlcNAc...) asparagine glycosylation occurs at Asn-264. Residue His-350 participates in Zn(2+) binding. The helical transmembrane segment at 415–435 (ASLLSSQHHLVALLVGILTCL) threads the bilayer. At 436–439 (AKVL) the chain is on the cytoplasmic side.

Zn(2+) serves as cofactor. N-glycosylated; required for activity and transport to the plasma membrane. Expressed in liver and small intestine.

It localises to the cell membrane. It carries out the reaction a sphingomyelin + H2O = phosphocholine + an N-acylsphing-4-enine + H(+). It catalyses the reaction a 1-O-alkyl-2-acetyl-sn-glycero-3-phosphocholine + H2O = a 1-O-alkyl-2-acetyl-sn-glycerol + phosphocholine + H(+). The enzyme catalyses 1-O-octadecyl-2-acetyl-sn-glycero-3-phosphocholine + H2O = 1-O-octadecyl-2-acetyl-sn-glycerol + phosphocholine + H(+). The catalysed reaction is 1-hexadecanoyl-sn-glycero-3-phosphocholine + H2O = 1-hexadecanoyl-sn-glycerol + phosphocholine + H(+). Its function is as follows. Choline-specific phosphodiesterase that hydrolyzes sphingomyelin releasing the ceramide and phosphocholine and therefore is involved in sphingomyelin digestion, ceramide formation, and fatty acid (FA) absorption in the gastrointestinal tract. Also has phospholipase C activity and can also cleave phosphocholine from palmitoyl lyso-phosphatidylcholine and platelet-activating factor (PAF) leading to its inactivation. Does not have nucleotide pyrophosphatase activity. May promote cholesterol absorption by affecting the levels of sphingomyelin derived from either diet or endogenous sources, in the intestinal lumen. The sequence is that of Ectonucleotide pyrophosphatase/phosphodiesterase family member 7 from Mus musculus (Mouse).